The following is a 108-amino-acid chain: UPF0145 protein Npun_F4817 (108 aa).

It belongs to the UPF0145 family.

This is UPF0145 protein Npun_F4817 from Nostoc punctiforme (strain ATCC 29133 / PCC 73102).